The primary structure comprises 229 residues: Large ribosomal subunit protein uL1 (229 aa).

This sequence belongs to the universal ribosomal protein uL1 family. In terms of assembly, part of the 50S ribosomal subunit.

In terms of biological role, binds directly to 23S rRNA. The L1 stalk is quite mobile in the ribosome, and is involved in E site tRNA release. Functionally, protein L1 is also a translational repressor protein, it controls the translation of the L11 operon by binding to its mRNA. The chain is Large ribosomal subunit protein uL1 from Actinobacillus succinogenes (strain ATCC 55618 / DSM 22257 / CCUG 43843 / 130Z).